The following is a 633-amino-acid chain: Carbon monoxide dehydrogenase 2 (633 aa).

[4Fe-4S] cluster contacts are provided by C44, C53, C56, C61, and C73. Residues H264, C343, C453, C484, and C525 each coordinate [Ni-4Fe-5S] cluster.

This sequence belongs to the Ni-containing carbon monoxide dehydrogenase family. As to quaternary structure, homodimer. The cofactor is [4Fe-4S] cluster. [Ni-4Fe-5S] cluster serves as cofactor.

It carries out the reaction CO + 2 oxidized [2Fe-2S]-[ferredoxin] + H2O = 2 reduced [2Fe-2S]-[ferredoxin] + CO2 + 2 H(+). In terms of biological role, CODH oxidizes carbon monoxide coupled, via CooF, to the reduction of a hydrogen cation by a hydrogenase (possibly CooH). This is Carbon monoxide dehydrogenase 2 (cooS2) from Methanosarcina acetivorans (strain ATCC 35395 / DSM 2834 / JCM 12185 / C2A).